Consider the following 449-residue polypeptide: Glutamyl-tRNA reductase (449 aa).

Substrate contacts are provided by residues 58–61 (TCNR), Ser-121, 126–128 (ETQ), and Gln-132. The active-site Nucleophile is Cys-59. Position 203 to 208 (203 to 208 (GLGEMA)) interacts with NADP(+).

It belongs to the glutamyl-tRNA reductase family. In terms of assembly, homodimer.

The enzyme catalyses (S)-4-amino-5-oxopentanoate + tRNA(Glu) + NADP(+) = L-glutamyl-tRNA(Glu) + NADPH + H(+). Its pathway is porphyrin-containing compound metabolism; protoporphyrin-IX biosynthesis; 5-aminolevulinate from L-glutamyl-tRNA(Glu): step 1/2. Its function is as follows. Catalyzes the NADPH-dependent reduction of glutamyl-tRNA(Glu) to glutamate 1-semialdehyde (GSA). The chain is Glutamyl-tRNA reductase from Helicobacter pylori (strain Shi470).